Consider the following 862-residue polypeptide: Leucine--tRNA ligase (862 aa).

Residues 44–54 carry the 'HIGH' region motif; it reads PYPSGRIHMGH. Positions 622–626 match the 'KMSKS' region motif; it reads KMSKS. Lys625 is a binding site for ATP.

Belongs to the class-I aminoacyl-tRNA synthetase family.

It localises to the cytoplasm. It carries out the reaction tRNA(Leu) + L-leucine + ATP = L-leucyl-tRNA(Leu) + AMP + diphosphate. The chain is Leucine--tRNA ligase from Rhodospirillum rubrum (strain ATCC 11170 / ATH 1.1.1 / DSM 467 / LMG 4362 / NCIMB 8255 / S1).